The sequence spans 106 residues: Iron-sulfur cluster assembly protein CyaY (106 aa).

It belongs to the frataxin family.

Involved in iron-sulfur (Fe-S) cluster assembly. May act as a regulator of Fe-S biogenesis. In Escherichia coli O7:K1 (strain IAI39 / ExPEC), this protein is Iron-sulfur cluster assembly protein CyaY.